The chain runs to 598 residues: Elongation factor 4 (598 aa).

The tr-type G domain maps to 2 to 184 (KNIRNFSIIA…RLVKEIPAPE (183 aa)). Residues 14 to 19 (DHGKST) and 131 to 134 (NKID) each bind GTP.

The protein belongs to the TRAFAC class translation factor GTPase superfamily. Classic translation factor GTPase family. LepA subfamily.

It localises to the cell inner membrane. The catalysed reaction is GTP + H2O = GDP + phosphate + H(+). Required for accurate and efficient protein synthesis under certain stress conditions. May act as a fidelity factor of the translation reaction, by catalyzing a one-codon backward translocation of tRNAs on improperly translocated ribosomes. Back-translocation proceeds from a post-translocation (POST) complex to a pre-translocation (PRE) complex, thus giving elongation factor G a second chance to translocate the tRNAs correctly. Binds to ribosomes in a GTP-dependent manner. In Proteus mirabilis (strain HI4320), this protein is Elongation factor 4.